A 224-amino-acid polypeptide reads, in one-letter code: Deoxyribose-phosphate aldolase (224 aa).

Aspartate 94 acts as the Proton donor/acceptor in catalysis. Lysine 158 functions as the Schiff-base intermediate with acetaldehyde in the catalytic mechanism. The active-site Proton donor/acceptor is lysine 187.

Belongs to the DeoC/FbaB aldolase family. DeoC type 1 subfamily. In terms of assembly, homodimer.

The protein localises to the cytoplasm. It carries out the reaction 2-deoxy-D-ribose 5-phosphate = D-glyceraldehyde 3-phosphate + acetaldehyde. Activated by citrate. Inhibited by NaBH(4). Activity is independent of divalent metal cations. In terms of biological role, catalyzes a reversible aldol reaction between acetaldehyde and D-glyceraldehyde 3-phosphate to generate 2-deoxy-D-ribose 5-phosphate. Could be involved in pentose biosynthesis. The sequence is that of Deoxyribose-phosphate aldolase from Thermococcus kodakarensis (strain ATCC BAA-918 / JCM 12380 / KOD1) (Pyrococcus kodakaraensis (strain KOD1)).